An 89-amino-acid chain; its full sequence is Co-chaperonin GroES (89 aa).

This sequence belongs to the GroES chaperonin family. In terms of assembly, heptamer of 7 subunits arranged in a ring. Interacts with the chaperonin GroEL.

Its subcellular location is the cytoplasm. Its function is as follows. Together with the chaperonin GroEL, plays an essential role in assisting protein folding. The GroEL-GroES system forms a nano-cage that allows encapsulation of the non-native substrate proteins and provides a physical environment optimized to promote and accelerate protein folding. GroES binds to the apical surface of the GroEL ring, thereby capping the opening of the GroEL channel. The chain is Co-chaperonin GroES from Parabacteroides distasonis (strain ATCC 8503 / DSM 20701 / CIP 104284 / JCM 5825 / NCTC 11152).